The sequence spans 311 residues: Acetaldehyde dehydrogenase (311 aa).

The Acyl-thioester intermediate role is filled by Cys-131. NAD(+) is bound by residues 162 to 170 (SVGPGTRKN) and Asn-273.

This sequence belongs to the acetaldehyde dehydrogenase family.

It catalyses the reaction acetaldehyde + NAD(+) + CoA = acetyl-CoA + NADH + H(+). The sequence is that of Acetaldehyde dehydrogenase from Ralstonia pickettii (strain 12J).